Consider the following 237-residue polypeptide: Pyrimidine 5'-nucleotidase PynA (237 aa).

The Nucleophile role is filled by D9. 3 residues coordinate Mg(2+): D9, D11, and D181. D11 (proton donor) is an active-site residue.

It belongs to the HAD-like hydrolase superfamily. YjjG family. As to quaternary structure, homodimer. Requires Mg(2+) as cofactor. Mn(2+) serves as cofactor.

Its subcellular location is the cytoplasm. The catalysed reaction is a ribonucleoside 5'-phosphate + H2O = a ribonucleoside + phosphate. Functionally, nucleotidase that shows high phosphatase activity toward non-canonical pyrimidine nucleotides and three canonical nucleoside 5'-monophosphates (UMP, dUMP and dTMP), and no activity against IMP, UDP, GMP, AMP, UTP or pNPP. Appears to function as a house-cleaning nucleotidase in vivo, since the general nucleotidase activity of it allows it to protect cells against non-canonical pyrimidine derivatives such as 5-fluoro-2'-deoxyuridine monophosphate (5-FdUMP), and prevents the incorporation of potentially mutagenic nucleotides such as 5-bromo-2'-deoxyuridine (5-BrdU) into DNA. Is strictly specific to pyrimidine substrates with 5'-monophosphates and shows no activity against nucleoside di- and triphosphates. The chain is Pyrimidine 5'-nucleotidase PynA from Streptococcus pneumoniae (strain ATCC BAA-255 / R6).